We begin with the raw amino-acid sequence, 411 residues long: Arginine deiminase (411 aa).

C401 (amidino-cysteine intermediate) is an active-site residue.

It belongs to the arginine deiminase family.

The protein localises to the cytoplasm. The catalysed reaction is L-arginine + H2O = L-citrulline + NH4(+). It participates in amino-acid degradation; L-arginine degradation via ADI pathway; carbamoyl phosphate from L-arginine: step 1/2. The chain is Arginine deiminase from Staphylococcus aureus (strain JH9).